A 95-amino-acid polypeptide reads, in one-letter code: SCYDLCRPCGPTPLANSCNEPCVRQCQDSRVVIQPSPVVVTLPGPILSSFPQNTAVGSTSAAVGSILSEEGVPISSGGFGLSGFGGRYSGRCLPC.

Ser-1 is modified (N-acetylserine).

The protein belongs to the avian keratin family. The avian keratins (F-ker, S-ker, C-ker and B-ker) are a complex mixture of very similar polypeptides.

The protein is Feather keratin B-4 of Anas platyrhynchos (Mallard).